The primary structure comprises 992 residues: Disks large-associated protein 4 (992 aa).

The segment covering 1-20 (MKGLGDSRPRHLSDSLDPPH) has biased composition (basic and acidic residues). Disordered regions lie at residues 1–31 (MKGLGDSRPRHLSDSLDPPHEPLFAGPDRNP) and 157–225 (MEGT…PASG). Over residues 162 to 171 (GKVGGNGSKK) the composition is skewed to gly residues. The segment covering 172 to 194 (GGLEDGKGRRAKSKERAKAGEPK) has biased composition (basic and acidic residues). The segment covering 199 to 208 (SNISGWWSSD) has biased composition (polar residues). A phosphoserine mark is found at serine 206 and serine 207. Arginine 290 carries the post-translational modification Omega-N-methylarginine. Residues 342 to 396 (TTLLSPRDMDSTAEGPIPCRRMRSGSYIKAMGDEDSDESGGGSPKPSPKTAARRQ) form a disordered region. Serine 377, serine 380, serine 384, serine 388, serine 405, serine 415, and serine 421 each carry phosphoserine. 3 disordered regions span residues 527-751 (SVSL…GPRQ), 763-798 (SYGDNSDPALEASSLPPPDPWLETSSSSPAEPAQPG), and 915-992 (TPEK…QTRL). Residues 528–554 (VSLQSLSPPPSTGSLSNSRTLPSSSCL) are compositionally biased toward low complexity. The segment covering 576–591 (VTVQSSTESAQDTYLD) has biased composition (polar residues). A phosphoserine mark is found at serine 580, serine 581, serine 609, serine 611, serine 665, and serine 744. Over residues 600–620 (TSQSGLSNSSDSLDSSTRPPS) the composition is skewed to low complexity. Residue threonine 915 is modified to Phosphothreonine. Basic and acidic residues-rich tracts occupy residues 915–925 (TPEKRKEEKKP) and 940–958 (VSRDKASDAGDKQRQEARK). A compositionally biased stretch (polar residues) spans 969 to 978 (VRQNSATESA). The residue at position 973 (serine 973) is a Phosphoserine.

This sequence belongs to the SAPAP family. Interacts with DLG1 and DLG4/PSD-95.

The protein localises to the membrane. Functionally, may play a role in the molecular organization of synapses and neuronal cell signaling. Could be an adapter protein linking ion channel to the subsynaptic cytoskeleton. May induce enrichment of PSD-95/SAP90 at the plasma membrane. In Mus musculus (Mouse), this protein is Disks large-associated protein 4 (Dlgap4).